We begin with the raw amino-acid sequence, 989 residues long: DNA-directed RNA polymerase subunit beta' (989 aa).

Asp-383, Asp-385, and Asp-387 together coordinate Mg(2+).

This sequence belongs to the RNA polymerase beta' chain family. In terms of assembly, the RNAP catalytic core consists of 2 alpha, 1 beta, 1 beta' and 1 omega subunit. When a sigma factor is associated with the core the holoenzyme is formed, which can initiate transcription. Mg(2+) is required as a cofactor.

The catalysed reaction is RNA(n) + a ribonucleoside 5'-triphosphate = RNA(n+1) + diphosphate. DNA-dependent RNA polymerase catalyzes the transcription of DNA into RNA using the four ribonucleoside triphosphates as substrates. This is DNA-directed RNA polymerase subunit beta' (rpoC) from Leuconostoc pseudomesenteroides.